Consider the following 691-residue polypeptide: F-box/LRR-repeat protein 5 (691 aa).

Residues 1-159 (MAPFPEEVDV…IKKKVIAQHC (159 aa)) are hemerythrin-like. Residues His15, His57, Glu58, Glu61, His80, His126, and Glu130 each coordinate Fe(3+). The F-box domain occupies 202–248 (STGITHLPPEVMLSIFSYLNPQELCRCSQVSMKWSQLTKTGSLWKHL). LRR repeat units follow at residues 340 to 364 (SSAV…LDLT), 365 to 392 (QTDI…DLSG), 393 to 418 (CEKI…QSGF), 479 to 508 (LWML…CVVE), 576 to 607 (TRLP…SLSG), 608 to 635 (CYQI…NLSG), and 636 to 661 (CLTI…YFYY). [2Fe-2S] cluster-binding residues include Cys662, Cys676, Cys686, and Cys687.

In terms of assembly, part of a SCF (SKP1-cullin-F-box) protein ligase complex. Interacts with ACO1/IRP1, IREB2/IRP2; the interaction depends on the [2Fe-2S] cluster. Interacts with DCTN1/p150-glued. Requires [2Fe-2S] cluster as cofactor. In terms of processing, polybiquitinated upon iron and oxygen depletion, leading to its degradation by the proteasome. Ubiquitination is regulated by the hemerythrin-like region that acts as an oxygen and iron sensor. Undergoes constitutive ubiquitin-dependent degradation at the steady state by HERC2.

Its subcellular location is the cytoplasm. It localises to the perinuclear region. The protein resides in the nucleus. The protein operates within protein modification; protein ubiquitination. Its activity is regulated as follows. An iron-sulfur cluster promotes IRP2 polyubiquitination and degradation in response to both iron and oxygen concentrations. Its function is as follows. Component of some SCF (SKP1-cullin-F-box) protein ligase complex that plays a central role in iron homeostasis by promoting the ubiquitination and subsequent degradation of IREB2/IRP2. The C-terminal domain of FBXL5 contains a redox-sensitive [2Fe-2S] cluster that, upon oxidation, promotes binding to IRP2 to effect its oxygen-dependent degradation. Under iron deficiency conditions, the N-terminal hemerythrin-like (Hr) region, which contains a diiron metal center, cannot bind iron and undergoes conformational changes that destabilize the FBXL5 protein and cause its ubiquitination and degradation. When intracellular iron levels start rising, the Hr region is stabilized. Additional increases in iron levels facilitate the assembly and incorporation of a redox active [2Fe-2S] cluster in the C-terminal domain. Only when oxygen level is high enough to maintain the cluster in its oxidized state can FBXL5 recruit IRP2 as a substrate for polyubiquination and degradation. Promotes ubiquitination and subsequent degradation of the dynactin complex component DCTN1. Within the nucleus, promotes the ubiquitination of SNAI1; preventing its interaction with DNA and promoting its degradation. Negatively regulates DNA damage response by mediating the ubiquitin-proteasome degradation of the DNA repair protein NABP2. This chain is F-box/LRR-repeat protein 5 (FBXL5), found in Pongo abelii (Sumatran orangutan).